We begin with the raw amino-acid sequence, 130 residues long: Small ribosomal subunit protein uS8 (130 aa).

This sequence belongs to the universal ribosomal protein uS8 family. Part of the 30S ribosomal subunit.

In terms of biological role, one of the primary rRNA binding proteins, it binds directly to 16S rRNA central domain where it helps coordinate assembly of the platform of the 30S subunit. The protein is Small ribosomal subunit protein uS8 of Nitrosopumilus maritimus (strain SCM1).